Consider the following 292-residue polypeptide: MNYKEWLAQAIADLAKKNPTENSKIDALVLLQHATGKSRTQILAFDDTEIDEKVRLKLTALLDRRLKGEPIAYILGEKEFWSLPLNVSKGTLIPRPDTEILVEKALQIALEKLEENPPHFRILDLGTGTGAIALALASELAPICQKRHIPLEIIGVDLMSDVVALAQSNAERNQLNVEFLQSRWFDNITGKFDLIVSNPPYIDAQDEHLHQGDVRFEPLSALVANDEGYADLRHIIELASSYLNSNGVLLLEHGWQQGEKVRSIFQENHWEMVETVRDYSDNERVTLGFWKK.

Residues 126 to 130, aspartate 157, tryptophan 184, and asparagine 198 contribute to the S-adenosyl-L-methionine site; that span reads GTGTG. 198–201 is a substrate binding site; that stretch reads NPPY.

This sequence belongs to the protein N5-glutamine methyltransferase family. PrmC subfamily.

It carries out the reaction L-glutaminyl-[peptide chain release factor] + S-adenosyl-L-methionine = N(5)-methyl-L-glutaminyl-[peptide chain release factor] + S-adenosyl-L-homocysteine + H(+). Functionally, methylates the class 1 translation termination release factors RF1/PrfA and RF2/PrfB on the glutamine residue of the universally conserved GGQ motif. The polypeptide is Release factor glutamine methyltransferase (Haemophilus influenzae (strain ATCC 51907 / DSM 11121 / KW20 / Rd)).